A 235-amino-acid polypeptide reads, in one-letter code: Calcium-activated potassium channel subunit beta-2 (235 aa).

The ball and chain stretch occupies residues 1–45 (MFIWTSGRTSSSYRHDEKRNIYQKIRDHDLLDKRKTVTALKAGED). The Cytoplasmic portion of the chain corresponds to 1 to 46 (MFIWTSGRTSSSYRHDEKRNIYQKIRDHDLLDKRKTVTALKAGEDR). The chain crosses the membrane as a helical span at residues 47 to 67 (AILLGLAMMVCSIMMYFLLGI). The Extracellular segment spans residues 68 to 194 (TLLRSYMQSV…VILTKLYSSN (127 aa)). Residues asparagine 88, asparagine 96, and asparagine 119 are each glycosylated (N-linked (GlcNAc...) asparagine). A helical membrane pass occupies residues 195–215 (VLFHSLFWPTCMMAGGVAIVA). Residues 216 to 235 (MVKLTQYLSLLCERIQRINR) are Cytoplasmic-facing.

Belongs to the KCNMB (TC 8.A.14.1) family. KCNMB2 subfamily. As to quaternary structure, interacts with KCNMA1 tetramer. There are probably 4 molecules of KCMNB2 per KCNMA1 tetramer. In terms of processing, N-glycosylated. In terms of tissue distribution, expressed in kidney, heart and brain. Highly expressed in ovary. Expressed at low level in other tissues.

The protein resides in the membrane. Its function is as follows. Regulatory subunit of the calcium activated potassium KCNMA1 (maxiK) channel. Modulates the calcium sensitivity and gating kinetics of KCNMA1, thereby contributing to KCNMA1 channel diversity. Acts as a negative regulator that confers rapid and complete inactivation of KCNMA1 channel complex. May participate in KCNMA1 inactivation in chromaffin cells of the adrenal gland or in hippocampal CA1 neurons. This chain is Calcium-activated potassium channel subunit beta-2 (KCNMB2), found in Homo sapiens (Human).